The following is a 488-amino-acid chain: Cardiolipin synthase 2 (488 aa).

2 consecutive transmembrane segments (helical) span residues 8–28 (IIINILLVSAFLLNLVFAFII) and 39–59 (IWAWLLVLVFLPLVGFILYLL). PLD phosphodiesterase domains follow at residues 223-250 (MNNRNHRKIVVIDGTIGYVGGFNVGDEY) and 401-428 (DNGFLHSKTLVIDDEVASVGTANMDNRS). Residues His-228, Lys-230, Asp-235, His-406, Lys-408, and Asp-413 contribute to the active site.

The protein belongs to the phospholipase D family. Cardiolipin synthase subfamily.

Its subcellular location is the cell membrane. It catalyses the reaction 2 a 1,2-diacyl-sn-glycero-3-phospho-(1'-sn-glycerol) = a cardiolipin + glycerol. In terms of biological role, catalyzes the reversible phosphatidyl group transfer from one phosphatidylglycerol molecule to another to form cardiolipin (CL) (diphosphatidylglycerol) and glycerol. This Staphylococcus epidermidis (strain ATCC 35984 / DSM 28319 / BCRC 17069 / CCUG 31568 / BM 3577 / RP62A) protein is Cardiolipin synthase 2 (cls2).